The sequence spans 874 residues: Alanine--tRNA ligase (874 aa).

Zn(2+) is bound by residues histidine 564, histidine 568, cysteine 665, and histidine 669.

The protein belongs to the class-II aminoacyl-tRNA synthetase family. The cofactor is Zn(2+).

It localises to the cytoplasm. The enzyme catalyses tRNA(Ala) + L-alanine + ATP = L-alanyl-tRNA(Ala) + AMP + diphosphate. Functionally, catalyzes the attachment of alanine to tRNA(Ala) in a two-step reaction: alanine is first activated by ATP to form Ala-AMP and then transferred to the acceptor end of tRNA(Ala). Also edits incorrectly charged Ser-tRNA(Ala) and Gly-tRNA(Ala) via its editing domain. This is Alanine--tRNA ligase from Burkholderia pseudomallei (strain 1106a).